A 679-amino-acid polypeptide reads, in one-letter code: UvrABC system protein B (679 aa).

The region spanning 25–176 is the Helicase ATP-binding domain; sequence YGVNQGKQYQ…NVRESLRELV (152 aa). 38–45 contacts ATP; sequence GATGTGKT. Positions 91 to 114 match the Beta-hairpin motif; that stretch reads YYDYYQPEAYVPVSDTYIAKTSSV. The Helicase C-terminal domain occupies 429-591; sequence QIDDLLDEIR…IIPKPAGKKP (163 aa). In terms of domain architecture, UVR spans 639–674; sequence PEIIDKLEGKMNLAAEELDFEQAAKLRDRIRQLRKK.

This sequence belongs to the UvrB family. Forms a heterotetramer with UvrA during the search for lesions. Interacts with UvrC in an incision complex.

The protein resides in the cytoplasm. Its function is as follows. The UvrABC repair system catalyzes the recognition and processing of DNA lesions. A damage recognition complex composed of 2 UvrA and 2 UvrB subunits scans DNA for abnormalities. Upon binding of the UvrA(2)B(2) complex to a putative damaged site, the DNA wraps around one UvrB monomer. DNA wrap is dependent on ATP binding by UvrB and probably causes local melting of the DNA helix, facilitating insertion of UvrB beta-hairpin between the DNA strands. Then UvrB probes one DNA strand for the presence of a lesion. If a lesion is found the UvrA subunits dissociate and the UvrB-DNA preincision complex is formed. This complex is subsequently bound by UvrC and the second UvrB is released. If no lesion is found, the DNA wraps around the other UvrB subunit that will check the other stand for damage. This is UvrABC system protein B from Prochlorococcus marinus (strain MIT 9211).